The sequence spans 69 residues: Putative membrane protein insertion efficiency factor (69 aa).

Belongs to the UPF0161 family.

The protein resides in the cell inner membrane. Functionally, could be involved in insertion of integral membrane proteins into the membrane. This chain is Putative membrane protein insertion efficiency factor, found in Azoarcus sp. (strain BH72).